A 699-amino-acid chain; its full sequence is DNA ligase (699 aa).

Residues 47–51 (DAQYD), 96–97 (SL), and Glu-128 each bind NAD(+). Catalysis depends on Lys-130, which acts as the N6-AMP-lysine intermediate. NAD(+) is bound by residues Arg-151, Glu-186, Lys-303, and Lys-327. 4 residues coordinate Zn(2+): Cys-422, Cys-425, Cys-440, and Cys-446. The BRCT domain occupies 620–699 (GDNLLLSNQT…EEWIKMVNEL (80 aa)).

This sequence belongs to the NAD-dependent DNA ligase family. LigA subfamily. The cofactor is Mg(2+). It depends on Mn(2+) as a cofactor.

The enzyme catalyses NAD(+) + (deoxyribonucleotide)n-3'-hydroxyl + 5'-phospho-(deoxyribonucleotide)m = (deoxyribonucleotide)n+m + AMP + beta-nicotinamide D-nucleotide.. Its function is as follows. DNA ligase that catalyzes the formation of phosphodiester linkages between 5'-phosphoryl and 3'-hydroxyl groups in double-stranded DNA using NAD as a coenzyme and as the energy source for the reaction. It is essential for DNA replication and repair of damaged DNA. This Orientia tsutsugamushi (strain Ikeda) (Rickettsia tsutsugamushi) protein is DNA ligase.